A 229-amino-acid chain; its full sequence is MAKKKAFTPLLYFASIVFLPWWISLSFTKSMESWVTNWWNTGQSEIFLNDIQEKSILERFIELEEILLLDEMIKEHSETRLQKLGIGIHKETIQLIKIQNEDRIHTILHLSTNIISFVILSGYSIFGNEELVILNSLAQEFLYNLSDTVKAFSILLLTDLCIGFHSPRGWELMIGSVYKDFGFVHNDQMISGLVSTFPVILDTLLKYWIFRYLNRVSPSLVVIYHSMND.

The next 3 helical transmembrane spans lie at 7–27 (FTPL…SLSF), 114–134 (IISF…LVIL), and 190–210 (ISGL…YWIF).

The protein belongs to the CemA family.

It is found in the plastid. The protein localises to the chloroplast inner membrane. It catalyses the reaction K(+)(in) + H(+)(out) = K(+)(out) + H(+)(in). Functionally, contributes to K(+)/H(+) antiport activity by supporting proton efflux to control proton extrusion and homeostasis in chloroplasts in a light-dependent manner to modulate photosynthesis. Prevents excessive induction of non-photochemical quenching (NPQ) under continuous-light conditions. Indirectly promotes efficient inorganic carbon uptake into chloroplasts. The chain is Potassium/proton antiporter CemA from Jasminum nudiflorum (Winter jasmine).